A 159-amino-acid chain; its full sequence is Cytochrome c-type biogenesis protein CcmE (159 aa).

Residues 1 to 8 (MNIRRKNR) lie on the Cytoplasmic side of the membrane. A helical; Signal-anchor for type II membrane protein membrane pass occupies residues 9-29 (LWIACAVLAGLALTIGLVLYA). Residues 30–159 (LRSNIDLFYT…PASVYKDPAS (130 aa)) lie on the Periplasmic side of the membrane. Residues H130 and Y134 each contribute to the heme site. The segment covering 132–147 (ENYTPPEVEKAMEANH) has biased composition (basic and acidic residues). A disordered region spans residues 132 to 159 (ENYTPPEVEKAMEANHRRPASVYKDPAS).

The protein belongs to the CcmE/CycJ family.

Its subcellular location is the cell inner membrane. Its function is as follows. Heme chaperone required for the biogenesis of c-type cytochromes. Transiently binds heme delivered by CcmC and transfers the heme to apo-cytochromes in a process facilitated by CcmF and CcmH. The polypeptide is Cytochrome c-type biogenesis protein CcmE (Escherichia coli (strain 55989 / EAEC)).